Consider the following 513-residue polypeptide: Zinc finger CCCH-type with G patch domain-containing protein (513 aa).

Residues 155–178 (PCSYYLEGECRFDETKCRFSHGAL) form a C3H1-type zinc finger. Composition is skewed to acidic residues over residues 252–261 (DQDEDDELSS) and 271–283 (DSSD…MDDL). The interval 252 to 283 (DQDEDDELSSEESNSSMNDDSSDEAESDMDDL) is disordered. The 47-residue stretch at 312–358 (TRGIGSKLMEKMGYIHGTGLGSDGRGIVTPVSAQILPQGRSLDACME) folds into the G-patch domain. Positions 455 to 467 (DMAKVKQSLDRNS) are enriched in basic and acidic residues. Residues 455-513 (DMAKVKQSLDRNSGDAQLQKRLQVQMESHKQELATLQAQERSLSKEQQTRKSKNKMFEF) are disordered. Residues 468 to 480 (GDAQLQKRLQVQM) are compositionally biased toward polar residues. A compositionally biased stretch (basic and acidic residues) spans 496–513 (SLSKEQQTRKSKNKMFEF).

The protein localises to the nucleus. Transcription repressor. This is Zinc finger CCCH-type with G patch domain-containing protein from Drosophila yakuba (Fruit fly).